A 59-amino-acid polypeptide reads, in one-letter code: Light-harvesting protein B-800-850 alpha chain A (59 aa).

Topologically, residues M1–K11 are cytoplasmic. The chain crosses the membrane as a helical span at residues P12 to L35. H31 is an a bacteriochlorophyll binding site. At S36–G59 the chain is on the periplasmic side.

This sequence belongs to the antenna complex alpha subunit family. The core complex is formed by different alpha and beta chains, binding bacteriochlorophyll molecules, and arranged most probably in tetrameric structures disposed around the reaction center. The non-pigmented gamma chains may constitute additional components.

The protein localises to the cell inner membrane. Antenna complexes are light-harvesting systems, which transfer the excitation energy to the reaction centers. The chain is Light-harvesting protein B-800-850 alpha chain A (pucAA) from Rhodopseudomonas palustris (strain ATCC BAA-98 / CGA009).